Consider the following 133-residue polypeptide: MWNEFKKFAFKGNVVDLAVGVVIGAAFGKIVSSLVKDVITPLLGMVLGGVDFTDLKLTFGKSSIMYGNFIQTIFDFLIIAAAIFMFVKVFNKLTSRKEEEEKEEEIPEPTKEEVLLGEIRDLLKQQNSSKDRA.

Transmembrane regions (helical) follow at residues 14-34 (VVDL…VSSL) and 67-87 (GNFI…FMFV).

It belongs to the MscL family. In terms of assembly, homopentamer.

It is found in the cell membrane. Channel that opens in response to stretch forces in the membrane lipid bilayer. May participate in the regulation of osmotic pressure changes within the cell. In Bacillus cereus (strain AH187), this protein is Large-conductance mechanosensitive channel.